Here is a 231-residue protein sequence, read N- to C-terminus: Coproheme decarboxylase (231 aa).

Residue Lys-44 forms an Isoglutamyl lysine isopeptide (Lys-Gln) (interchain with Q-Cter in protein Pup) linkage. Residue Tyr-133 is part of the active site. His-156 is a binding site for Fe-coproporphyrin III.

This sequence belongs to the ChdC family. Type 2 subfamily. It depends on Fe-coproporphyrin III as a cofactor.

The catalysed reaction is Fe-coproporphyrin III + 2 H2O2 + 2 H(+) = heme b + 2 CO2 + 4 H2O. It catalyses the reaction Fe-coproporphyrin III + H2O2 + H(+) = harderoheme III + CO2 + 2 H2O. The enzyme catalyses harderoheme III + H2O2 + H(+) = heme b + CO2 + 2 H2O. Its pathway is porphyrin-containing compound metabolism; protoheme biosynthesis. In terms of biological role, involved in coproporphyrin-dependent heme b biosynthesis. Catalyzes the decarboxylation of Fe-coproporphyrin III (coproheme) to heme b (protoheme IX), the last step of the pathway. The reaction occurs in a stepwise manner with a three-propionate intermediate. The sequence is that of Coproheme decarboxylase from Mycolicibacterium smegmatis (strain ATCC 700084 / mc(2)155) (Mycobacterium smegmatis).